Reading from the N-terminus, the 595-residue chain is DNA-binding protein REB1 (595 aa).

Basic and acidic residues-rich tracts occupy residues 25–46 and 54–71; these read KSGE…KEQD and DPGR…RDAN. Residues 25-208 form a disordered region; sequence KSGEDDAVNK…IDDHVDDVSV (184 aa). Residues 75–84 are compositionally biased toward low complexity; sequence AVAAAAVAAA. Residues 114–123 show a composition bias toward basic residues; the sequence is KKSKKNKNKL. Positions 163-176 are enriched in polar residues; that stretch reads NIASQHPDFQQYLN. Residues 182–205 show a composition bias toward basic and acidic residues; the sequence is EPKKEKSEERSYGDLSNIDDHVDD. One can recognise an HTH myb-type domain in the interval 333 to 384; the sequence is HIFEQRGKWTPEEDAELARWCAEKEGQWSNIGKVLGRMPEDCRDRWRNYVKC. Positions 360–382 form a DNA-binding region, H-T-H motif; that stretch reads WSNIGKVLGRMPEDCRDRWRNYV. Positions 385-490 constitute a Myb-like domain; that stretch reads GPNRAANKWS…QCRYKWNKLL (106 aa). The interval 414 to 456 is disordered; that stretch reads TAYEDGEDDEMKDSSTKIEDSGDADMLDVQDSDKKPSISNSKK. Positions 434-443 are enriched in acidic residues; it reads SGDADMLDVQ.

The protein resides in the nucleus. In terms of biological role, DNA-binding protein that recognizes sites within both the enhancer and the promoter of rRNA transcription, as well as upstream of many genes transcribed by RNA polymerase II. It is essential for cell growth. May stimulate or inhibit transcription. Specifically recognizes the sequence 5'-CCGGGTA-3' or 5'-CGGGTRR-3' (where R is any purine). This is DNA-binding protein REB1 (REB1) from Kluyveromyces lactis (strain ATCC 8585 / CBS 2359 / DSM 70799 / NBRC 1267 / NRRL Y-1140 / WM37) (Yeast).